Consider the following 147-residue polypeptide: uncharacterized protein (147 aa).

A helical membrane pass occupies residues 69–89; it reads IFFFLSLYLSSIKIPMLILNI.

It localises to the membrane. This is an uncharacterized protein from Saccharomyces cerevisiae (strain ATCC 204508 / S288c) (Baker's yeast).